A 420-amino-acid chain; its full sequence is Dual-specificity RNA methyltransferase RlmN (420 aa).

The active-site Proton acceptor is the Glu115. Positions 121–388 constitute a Radical SAM core domain; sequence DADRGTLCVS…APIRTPRGRD (268 aa). Residues Cys128 and Cys393 are joined by a disulfide bond. Cys135, Cys139, and Cys142 together coordinate [4Fe-4S] cluster. S-adenosyl-L-methionine contacts are provided by residues 217 to 218, Ser249, 271 to 273, and Asn350; these read GE and SLH. The active-site S-methylcysteine intermediate is Cys393.

Belongs to the radical SAM superfamily. RlmN family. [4Fe-4S] cluster is required as a cofactor.

The protein localises to the cytoplasm. It carries out the reaction adenosine(2503) in 23S rRNA + 2 reduced [2Fe-2S]-[ferredoxin] + 2 S-adenosyl-L-methionine = 2-methyladenosine(2503) in 23S rRNA + 5'-deoxyadenosine + L-methionine + 2 oxidized [2Fe-2S]-[ferredoxin] + S-adenosyl-L-homocysteine. The catalysed reaction is adenosine(37) in tRNA + 2 reduced [2Fe-2S]-[ferredoxin] + 2 S-adenosyl-L-methionine = 2-methyladenosine(37) in tRNA + 5'-deoxyadenosine + L-methionine + 2 oxidized [2Fe-2S]-[ferredoxin] + S-adenosyl-L-homocysteine. Its function is as follows. Specifically methylates position 2 of adenine 2503 in 23S rRNA and position 2 of adenine 37 in tRNAs. m2A2503 modification seems to play a crucial role in the proofreading step occurring at the peptidyl transferase center and thus would serve to optimize ribosomal fidelity. The polypeptide is Dual-specificity RNA methyltransferase RlmN (Sphingopyxis alaskensis (strain DSM 13593 / LMG 18877 / RB2256) (Sphingomonas alaskensis)).